A 427-amino-acid chain; its full sequence is Putative acyl-CoA thioester hydrolase YbhC (427 aa).

The first 21 residues, 1–21 (MNTFSVSRLALALAFGVTLTA), serve as a signal peptide directing secretion. A lipid anchor (N-palmitoyl cysteine) is attached at C22. C22 carries the S-diacylglycerol cysteine lipid modification. A disordered region spans residues 23–42 (SSTPPDQRPSDQTAPGTSSR). A disulfide bridge connects residues C185 and C197. The active-site Nucleophile is the D285. R345 contributes to the substrate binding site.

It belongs to the pectinesterase family.

It localises to the cell outer membrane. Its function is as follows. Putative thioesterase. Does not bind pectin, and has no pectinesterase activity. The protein is Putative acyl-CoA thioester hydrolase YbhC (ybhC) of Escherichia coli (strain K12).